The sequence spans 724 residues: MATVPTPSEAHGGATPTAADVEMVEASELRRRGKPSGDRATGPSRDGAAAAAEEAAAPSVERVFADRPVPSWREQLTVRAFVVSFFLVIMFSVIVMKLNLTTGIIPSLNVSAGLLGFFFVRLWTAAIERVGLLRQPFTRQENTVIQTCVVAGYDIAFSGGFGNYILSMSERIAGLGTEANNAQNIKNPHLGWIIGFLFLVSFIGLFGLVPLRKVMIIDYKLTYPSGTATAFLINGFHTPHGAKIAAKQVKKLGIFFILSFFWGFFQWFYTATDDCGFHKFPSLGLQAFQHKFFFDFSPTYVGVGMICPHIVNVSVLLGGILSWGIMWPLIAKKRGDWFSADLPDGSLHGMQGYRVFIAIALILGDGLYNFLKMIILTAFSLRSQIKKKNASTLPVSDDGMVTTTAAVSYDEERRNELFVKDQIPWYVAYGGYAVVAAISIGTVPQIIPQLKWYQILVAYIVAPILAFCNAYGTGLTDWSLVTTYGKLAIFAFGAWTGASHGGVLAGLAACGVMMNIVSTAADLMQDFKTGYLTLASPRSMFVSQVIGTAMGCVIAPCVFWLFYKAFDNIGISGSDYPAPNAAVFRSIAILGVDGFSSLPKNCLNLCYAFFAAAIVVNLIRDLVPKVSRFIPIPMAMAIPFYIGSYFAIDMFIGTVILFVWQRVDRAKADTYGPAVASGMICGDGIWVLPQSVLALAKVKPPICMKFLSRRTNDKVDAFLTTLGK.

The segment at 1–54 (MATVPTPSEAHGGATPTAADVEMVEASELRRRGKPSGDRATGPSRDGAAAAAEE) is disordered. 14 consecutive transmembrane segments (helical) span residues 80–100 (AFVV…KLNL), 103–123 (GIIP…VRLW), 148–168 (CVVA…ILSM), 190–210 (LGWI…GLVP), 252–272 (LGIF…YTAT), 310–330 (IVNV…WPLI), 355–375 (VFIA…KMII), 423–443 (IPWY…IGTV), 455–475 (ILVA…GTGL), 487–507 (LAIF…LAGL), 541–561 (FVSQ…VFWL), 603–623 (LNLC…RDLV), 640–660 (FYIG…LFVW), and 675–695 (VASG…VLAL).

It belongs to the YSL (TC 2.A.67.2) family. As to expression, expressed in leaves and at low levels in root cortex.

It localises to the membrane. Functionally, may be involved in the transport of nicotianamine-chelated metals. The protein is Probable metal-nicotianamine transporter YSL13 (YSL13) of Oryza sativa subsp. japonica (Rice).